The following is a 335-amino-acid chain: Leukocyte cell-derived chemotaxin-2 homolog (335 aa).

The first 20 residues, Met1–Thr20, serve as a signal peptide directing secretion. 2 disulfides stabilise this stretch: Cys28–Cys66 and Cys39–Cys46. Asp63 contacts Zn(2+). A glycan (N-linked (GlcNAc...) asparagine) is linked at Asn317.

Belongs to the LECT2/MIM-1 family. Component of a multi-protein dma-1 receptor-ligand complex, which is activated upon binding of lect-2, mnr-1 and sax-7 ligands to promote the morphogenesis of dendrites which extend from the PVD neuronal body. Within the complex interacts with sax-7; the interaction is required for lect-2 dendritic localization and enhances the binding of the mnr-1 and sax-7 ligands to the dma-1 receptor-ligand complex. In terms of tissue distribution, expressed in body wall muscle cells, along the boundary of the lateral hypodermis, seam cells, processes of the nervous system including commissures, sensory dendrites in the head, and lateral nerve tracts, and motor neurons and some mechanosensory neurons such as ALM.

Its subcellular location is the secreted. The protein localises to the cell junction. It localises to the extracellular space. It is found in the extracellular matrix. The protein resides in the basement membrane. Its subcellular location is the cell projection. The protein localises to the dendrite. It localises to the perikaryon. It is found in the cell surface. In terms of biological role, muscle-derived dendritic guidance cue, which is required for the formation of somatosensory dendritic arbors which extend from PVD and FLP sensory neurons during development. Ligand of a multi-protein dma-1 receptor-ligand complex, which is activated upon binding of lect-2, mnr-1 and sax-7 ligands to control the growth of dendrites that extend anteriorly from the PVD neuronal cell body. Enhances the binding of the mnr-1 and sax-7 ligands to the dma-1 receptor-ligand complex. Restricts the growth of secondary PVD dendritic branches and any irregularly positioned ectopic tertiary dendritic branches that originate from secondary branches, and promotes the formation of stable higher order dendritic branches. In particular, it is required for the formation of quaternary PVD dendritic branches and promotes their innervation of body wall muscles. Promotes self-avoidance of tertiary dendritic branches of PVD sensory neurons. Not required for the growth of dendrites that extend from AIY and PVQ interneurons, DVB GABergic neurons, PLM and ALM mechanosensory neurons, AFD sensory neurons and DD/VD and DA/DB motor neurons. In Caenorhabditis elegans, this protein is Leukocyte cell-derived chemotaxin-2 homolog.